The chain runs to 131 residues: Small ribosomal subunit protein bS6 (131 aa).

Belongs to the bacterial ribosomal protein bS6 family.

Binds together with bS18 to 16S ribosomal RNA. In Borrelia hermsii (strain HS1 / DAH), this protein is Small ribosomal subunit protein bS6.